The following is a 2443-amino-acid chain: NFX1-type zinc finger-containing protein 1 homolog (2443 aa).

Disordered regions lie at residues 212-339 (PHKQ…EGDH), 545-566 (SSDSGRQVLSESRGAGSSNVYG), and 583-672 (HRDN…FVSP). Residues 246–263 (ISISNSSPPGLSSVSPIP) are compositionally biased toward low complexity. A compositionally biased stretch (pro residues) spans 275–294 (PQPPGLSIPAPPGISLPTPP). Residues 297-310 (SLQNHQNDQFEQAH) show a composition bias toward polar residues. Positions 311 to 322 (STISRMSENSSS) are enriched in low complexity. Over residues 545–564 (SSDSGRQVLSESRGAGSSNV) the composition is skewed to polar residues. Basic and acidic residues-rich tracts occupy residues 601–638 (GEVHRRLDEQQQQRHEDESSRYRDDSRQSRRADDRRDQ) and 662–672 (EHSRDDKFVSP). The region spanning 1040–1545 (MDESQRLAFC…MNLTISDKIV (506 aa)) is the UvrD-like helicase ATP-binding domain. 1061 to 1068 (GPPGTGKT) contacts ATP. 4 consecutive NF-X1-type zinc fingers follow at residues 1769 to 1791 (CGHVCERLCHPNMEEEHLQRCLY), 1853 to 1873 (CGHACAAKCGEECTLVSECSQ), 1912 to 1930 (CPHKCAEICGQPCTVECME), and 2027 to 2044 (CGHTCSAKCGESCPPCKA).

The protein belongs to the ZNFX1 family. Interacts with ego-1, csr-1, wago-1 and prg-1. Interacts with wago-4; the interaction promotes the transmission of epigenetic information across generations. In terms of tissue distribution, expressed in germs cells. Not expressed in somatic tissues.

Its subcellular location is the cytoplasm. The protein localises to the perinuclear region. It is found in the cytoplasmic granule. The catalysed reaction is ATP + H2O = ADP + phosphate + H(+). Its function is as follows. Epigenetic inheritance factor which, in association with the Argonaute protein wago-4, mediates small RNA-directed transgenerational epigenetic inheritance and thus balances the transgenerational inheritance of epigenetic information. Specifically, maintains a balanced production of small RNAs by preventing the spread of epigenetic signals towards the 5'-end of target mRNAs. Plays a role in small RNA-induced gene silencing in the germline. This chain is NFX1-type zinc finger-containing protein 1 homolog, found in Caenorhabditis elegans.